Reading from the N-terminus, the 131-residue chain is Glycine cleavage system H protein (131 aa).

In terms of domain architecture, Lipoyl-binding spans 24–106; sequence RVTVGISDHA…YGEGWMFVVE (83 aa). Lys65 is modified (N6-lipoyllysine).

It belongs to the GcvH family. The glycine cleavage system is composed of four proteins: P, T, L and H. Requires (R)-lipoate as cofactor.

Functionally, the glycine cleavage system catalyzes the degradation of glycine. The H protein shuttles the methylamine group of glycine from the P protein to the T protein. The sequence is that of Glycine cleavage system H protein from Stenotrophomonas maltophilia (strain K279a).